Consider the following 1803-residue polypeptide: 6-methylsalicylic acid synthase (1803 aa).

A disordered region spans residues 1 to 40; the sequence is MEVHGDEVLSVDSGVSTPPSTGSGFRRPLETPGTEIGNLN. Low complexity predominate over residues 13 to 24; sequence SGVSTPPSTGSG. The Ketosynthase family 3 (KS3) domain occupies 44–470; it reads QNEVAVVGMA…GTVSHAIIEE (427 aa). Active-site for beta-ketoacyl synthase activity residues include cysteine 216, histidine 351, and histidine 391. One can recognise a Malonyl-CoA:ACP transacylase (MAT) domain in the interval 581-894; the sequence is VWVFSGHGAQ…SIAQLHCRGA (314 aa). The active-site For malonyltransferase activity is the serine 667. An N-terminal hotdog fold region spans residues 940–1058; the sequence is HTLLGQRVPV…GQWEAGGSKN (119 aa). The region spanning 940–1218 is the PKS/mFAS DH domain; sequence HTLLGQRVPV…FSEIEGTPGS (279 aa). Histidine 972 (proton acceptor; for thioesterase activity) is an active-site residue. Positions 1073 to 1218 are C-terminal hotdog fold; the sequence is ANNKLADNFS…FSEIEGTPGS (146 aa). Aspartate 1129 acts as the Proton donor; for thioesterase activity in catalysis. A required for homotetramer formation region spans residues 1141–1262; the sequence is TSVGSTLFFD…KNVADLYCGS (122 aa). The Ketoreductase (KR) domain maps to 1434 to 1628; that stretch reads STYLITGGLG…AVAVQWTSWR (195 aa). Residues 1701–1710 show a composition bias toward low complexity; that stretch reads ASSADAPSAA. Positions 1701 to 1721 are disordered; that stretch reads ASSADAPSAAPKETNEMPESI. The 76-residue stretch at 1726–1801 folds into the Carrier domain; sequence TWLDERIRDC…HLVGWFLEKM (76 aa). At serine 1761 the chain carries O-(pantetheine 4'-phosphoryl)serine. Residues 1783-1803 are required for catalytic activity; that stretch reads LTWSCPTVSHLVGWFLEKMGN.

As to quaternary structure, homotetramer.

It catalyses the reaction 3 malonyl-CoA + acetyl-CoA + NADPH + 3 H(+) = 6-methylsalicylate + 3 CO2 + NADP(+) + 4 CoA + H2O. Its pathway is secondary metabolite biosynthesis. 6-methylsalicylic acid synthase; part of the gene cluster that mediates the biosynthesis of terreic acid, a quinone epoxide inhibitor of Bruton's tyrosine kinase. The first step of the pathway is the synthesis of 6-methylsalicylic acid (6-MSA) by the 6-methylsalicylic acid synthase atX. In the biosynthesis of 6-MSA, atX utilizes one acetyl-CoA and three malonyl-CoAs as its substrates and catalyzes a series of programmed reactions including Claisen condensation, reduction, aldol cyclization, and the hydrolytic cleavage that yields 6-MSA. The 6-methylsalicylate 1-monooxygenase atA then catalyzes the decarboxylative hydroxylation of 6-MSA to 3-methylcatechol. The next step is the conversion of 3-methylcatechol to 3-methyl-1,2,4-benzenetriol by cytochrome P450 monooxygenase atE, which is enhanced by cytochrome P450 monooxygenase atG. Then, the epoxidase atD catalyzes the epoxidation and hydroxyl oxidation of 3-methyl-1,2,4-benzenetriol to terremutin. Lastly, GMC oxidoreductase atC oxidizes terremutin to terreic acid. This chain is 6-methylsalicylic acid synthase, found in Aspergillus terreus (strain NIH 2624 / FGSC A1156).